The chain runs to 487 residues: Protein nucleotidyltransferase YdiU (487 aa).

8 residues coordinate ATP: Gly90, Gly92, Arg93, Lys113, Asp125, Gly126, Arg176, and Arg183. The active-site Proton acceptor is Asp252. Residues Asn253 and Asp262 each contribute to the Mg(2+) site. Asp262 serves as a coordination point for ATP.

It belongs to the SELO family. The cofactor is Mg(2+). Requires Mn(2+) as cofactor.

The catalysed reaction is L-seryl-[protein] + ATP = 3-O-(5'-adenylyl)-L-seryl-[protein] + diphosphate. It catalyses the reaction L-threonyl-[protein] + ATP = 3-O-(5'-adenylyl)-L-threonyl-[protein] + diphosphate. It carries out the reaction L-tyrosyl-[protein] + ATP = O-(5'-adenylyl)-L-tyrosyl-[protein] + diphosphate. The enzyme catalyses L-histidyl-[protein] + UTP = N(tele)-(5'-uridylyl)-L-histidyl-[protein] + diphosphate. The catalysed reaction is L-seryl-[protein] + UTP = O-(5'-uridylyl)-L-seryl-[protein] + diphosphate. It catalyses the reaction L-tyrosyl-[protein] + UTP = O-(5'-uridylyl)-L-tyrosyl-[protein] + diphosphate. Functionally, nucleotidyltransferase involved in the post-translational modification of proteins. It can catalyze the addition of adenosine monophosphate (AMP) or uridine monophosphate (UMP) to a protein, resulting in modifications known as AMPylation and UMPylation. The chain is Protein nucleotidyltransferase YdiU from Pseudomonas fluorescens (strain SBW25).